Consider the following 113-residue polypeptide: Hydrogenase maturation factor HypA (113 aa).

H2 provides a ligand contact to Ni(2+). C73, C76, C89, and C92 together coordinate Zn(2+).

The protein belongs to the HypA/HybF family.

Functionally, involved in the maturation of [NiFe] hydrogenases. Required for nickel insertion into the metal center of the hydrogenase. The protein is Hydrogenase maturation factor HypA of Beijerinckia indica subsp. indica (strain ATCC 9039 / DSM 1715 / NCIMB 8712).